The following is a 147-amino-acid chain: Leghemoglobin 6 (147 aa).

The 146-residue stretch at 2-147 folds into the Globin domain; that stretch reads SFTDKQEALV…LATEIKKAMS (146 aa). Nitrated tyrosine occurs at positions 25 and 30. Residue serine 45 coordinates heme b. Serine 45 is subject to Phosphoserine. Histidine 62 serves as a coordination point for O2. Lysine 65, histidine 94, and lysine 97 together coordinate heme b. Tyrosine 135 is modified (nitrated tyrosine).

The protein belongs to the plant globin family. As to quaternary structure, monomer. In terms of processing, nitrated in effective nodules and particularly in hypoxic conditions; this mechanism may play a protective role in the symbiosis by buffering toxic peroxynitrite NO(2)(-). Nitration level decrease during nodule senescence. Phosphorylation at Ser-45 disrupts the molecular environment of its porphyrin ring oxygen binding pocket, thus leading to a reduced oxygen consumption and to the delivery of oxygen O(2) to symbiosomes. As to expression, root nodules.

It localises to the cytoplasm. The protein localises to the cytosol. Its subcellular location is the nucleus. Leghemoglobin that reversibly binds oxygen O(2) through a pentacoordinated heme iron. In root nodules, facilitates the diffusion of oxygen to the bacteroids while preventing the bacterial nitrogenase from being inactivated by buffering dioxygen, nitric oxide and carbon monoxide, and promoting the formation of reactive oxygen species (ROS, e.g. H(2)O(2)). This role is essential for symbiotic nitrogen fixation (SNF). The sequence is that of Leghemoglobin 6 from Medicago truncatula (Barrel medic).